The following is a 55-amino-acid chain: Large ribosomal subunit protein bL33A (55 aa).

This sequence belongs to the bacterial ribosomal protein bL33 family.

This chain is Large ribosomal subunit protein bL33A, found in Mycobacterium sp. (strain KMS).